A 147-amino-acid polypeptide reads, in one-letter code: Large ribosomal subunit protein uL16 (147 aa).

The span at 1–16 (MLMPKRVKRRRVHRGR) shows a compositional bias: basic residues. The segment at 1-20 (MLMPKRVKRRRVHRGRMTGQ) is disordered.

The protein belongs to the universal ribosomal protein uL16 family. In terms of assembly, part of the 50S ribosomal subunit.

Its function is as follows. Binds 23S rRNA and is also seen to make contacts with the A and possibly P site tRNAs. This Alkaliphilus metalliredigens (strain QYMF) protein is Large ribosomal subunit protein uL16.